Consider the following 122-residue polypeptide: Aspartate 1-decarboxylase (122 aa).

Ser-25 serves as the catalytic Schiff-base intermediate with substrate; via pyruvic acid. The residue at position 25 (Ser-25) is a Pyruvic acid (Ser). Thr-57 lines the substrate pocket. The active-site Proton donor is the Tyr-58. 73–75 (GAA) serves as a coordination point for substrate.

It belongs to the PanD family. Heterooctamer of four alpha and four beta subunits. Pyruvate serves as cofactor. Is synthesized initially as an inactive proenzyme, which is activated by self-cleavage at a specific serine bond to produce a beta-subunit with a hydroxyl group at its C-terminus and an alpha-subunit with a pyruvoyl group at its N-terminus.

It localises to the cytoplasm. The enzyme catalyses L-aspartate + H(+) = beta-alanine + CO2. Its pathway is cofactor biosynthesis; (R)-pantothenate biosynthesis; beta-alanine from L-aspartate: step 1/1. Functionally, catalyzes the pyruvoyl-dependent decarboxylation of aspartate to produce beta-alanine. This Bordetella pertussis (strain Tohama I / ATCC BAA-589 / NCTC 13251) protein is Aspartate 1-decarboxylase.